We begin with the raw amino-acid sequence, 161 residues long: Anthranilate 1,2-dioxygenase small subunit (161 aa).

Belongs to the bacterial ring-hydroxylating dioxygenase beta subunit family. In terms of assembly, part of a multicomponent enzyme system composed of a reductase (AndAa), a ferredoxin (AndAb) and a two-subunit oxygenase component (AndAc and AndAd).

It carries out the reaction anthranilate + NADH + O2 + 3 H(+) = catechol + NH4(+) + CO2 + NAD(+). The catalysed reaction is anthranilate + NADPH + O2 + 3 H(+) = catechol + NH4(+) + CO2 + NADP(+). Its pathway is aromatic compound metabolism; anthranilate degradation via hydroxylation; catechol from anthranilate: step 1/1. Its function is as follows. Oxygenase component of anthranilate dioxygenase multicomponent enzyme system which catalyzes the incorporation of both atoms of molecular oxygen into anthranilate to form catechol. Can also act on benzoate and salicylate but not on 2-chlorobenzoate or o-toluate. In Burkholderia cepacia (Pseudomonas cepacia), this protein is Anthranilate 1,2-dioxygenase small subunit.